Consider the following 729-residue polypeptide: Polyribonucleotide nucleotidyltransferase (729 aa).

Residues 399–419 (YMHNYNFPPYSTGETGRVGSP) are disordered. Mg(2+) contacts are provided by D509 and D515. The region spanning 575–634 (PRVISVKIPVDKIGEVIGPKGKMINQIQADSGAEITVEDDGTIYIGAADGPAAETARSAI) is the KH domain. The 73-residue stretch at 646 to 718 (GERYLGTIVK…ARGKISLAPG (73 aa)) folds into the S1 motif domain.

Belongs to the polyribonucleotide nucleotidyltransferase family. Requires Mg(2+) as cofactor.

It is found in the cytoplasm. It carries out the reaction RNA(n+1) + phosphate = RNA(n) + a ribonucleoside 5'-diphosphate. Functionally, involved in mRNA degradation. Catalyzes the phosphorolysis of single-stranded polyribonucleotides processively in the 3'- to 5'-direction. The protein is Polyribonucleotide nucleotidyltransferase of Parafrankia sp. (strain EAN1pec).